Consider the following 365-residue polypeptide: Peptide chain release factor 2 (365 aa).

At glutamine 251 the chain carries N5-methylglutamine.

The protein belongs to the prokaryotic/mitochondrial release factor family. Post-translationally, methylated by PrmC. Methylation increases the termination efficiency of RF2.

Its subcellular location is the cytoplasm. Peptide chain release factor 2 directs the termination of translation in response to the peptide chain termination codons UGA and UAA. The protein is Peptide chain release factor 2 of Campylobacter jejuni (strain RM1221).